Reading from the N-terminus, the 550-residue chain is Formate--tetrahydrofolate ligase (550 aa).

60–67 (TPFGEGKT) lines the ATP pocket.

The protein belongs to the formate--tetrahydrofolate ligase family.

The catalysed reaction is (6S)-5,6,7,8-tetrahydrofolate + formate + ATP = (6R)-10-formyltetrahydrofolate + ADP + phosphate. Its pathway is one-carbon metabolism; tetrahydrofolate interconversion. The protein is Formate--tetrahydrofolate ligase of Campylobacter curvus (strain 525.92).